The chain runs to 160 residues: Siroheme decarboxylase NirH subunit (160 aa).

This sequence belongs to the Ahb/Nir family. In terms of assembly, forms a complex composed of NirDL, NirG and NirH. All proteins are required for the total conversion of siroheme to didecarboxysiroheme.

It carries out the reaction siroheme + 2 H(+) = 12,18-didecarboxysiroheme + 2 CO2. It functions in the pathway porphyrin-containing compound metabolism. Functionally, involved in heme d1 biosynthesis. Catalyzes the decarboxylation of siroheme into didecarboxysiroheme. Siroheme is probably decarboxylated to monodecarboxysiroheme, which is in turn decarboxylated to didecarboxysiroheme. The sequence is that of Siroheme decarboxylase NirH subunit from Paracoccus pantotrophus (Thiosphaera pantotropha).